The chain runs to 243 residues: Venom nerve growth factor 1 (243 aa).

An N-terminal signal peptide occupies residues Met-1–Ala-18. Residues Ala-19–Arg-125 constitute a propeptide that is removed on maturation. The segment covering Gly-47–Asp-66 has biased composition (basic and acidic residues). A disordered region spans residues Gly-47–Leu-69. Disulfide bonds link Cys-139/Cys-204, Cys-182/Cys-232, and Cys-192/Cys-234. An N-linked (GlcNAc...) asparagine glycan is attached at Asn-148.

This sequence belongs to the NGF-beta family. In terms of assembly, homodimer; non-covalently linked. In terms of tissue distribution, expressed by the venom gland.

The protein localises to the secreted. Its function is as follows. Nerve growth factor is important for the development and maintenance of the sympathetic and sensory nervous systems. It stimulates division and differentiation of sympathetic and embryonic sensory neurons as well as basal forebrain cholinergic neurons in the brain. Its relevance in the snake venom is not clear. However, it has been shown to inhibit metalloproteinase-dependent proteolysis of platelet glycoprotein Ib alpha, suggesting a metalloproteinase inhibition to prevent metalloprotease autodigestion and/or protection against prey proteases. Binds a lipid between the two protein chains in the homodimer. The lipid-bound form promotes histamine relase from mouse mast cells, contrary to the lipid-free form. This Oxyuranus microlepidotus (Inland taipan) protein is Venom nerve growth factor 1.